The sequence spans 425 residues: MAKQIQAIRGMNDILPTQSPLWQKVEAVLRASVAAYGYSEIRTPIVENTDLFKRSIGEVTDIVEKEMYTFEDRNGDSLTLRPEGTASTVRAGNEHGLLYNQEQRLWYMGPMFRHERPQKGRYRQFHQFGVEVYGIGSADIDAEVLMLSARLWEKLGISEHVTLELNTLGDPAERAAYREALIAFLEQHKDKLDEDSQRRMYSNPLRVLDSKDPQVQSILADAPALMDYLGEESSQHFAQLRELLDAVGIQYRVNPRLVRGLDYYNRTVFEWVTNSLGSQGTVLAGGRYDGLVAQLGGKDTPAVGFAMGLERIVLLLETLELTQDIPAAVDVYVAAMGDSCLVEAIKVAQELRSTLPTLRVMSHCGGGNFKKQIKRADKSGAQVALLIGEEELAEGVVTVKYLRNDNEQQRVARNALSAFLAELTK.

The protein belongs to the class-II aminoacyl-tRNA synthetase family. As to quaternary structure, homodimer.

The protein localises to the cytoplasm. The enzyme catalyses tRNA(His) + L-histidine + ATP = L-histidyl-tRNA(His) + AMP + diphosphate + H(+). The chain is Histidine--tRNA ligase from Shewanella sp. (strain ANA-3).